The sequence spans 954 residues: Leucine--tRNA ligase (954 aa).

Positions 67-78 match the 'HIGH' region motif; the sequence is PYPSGAGLHVGH. Positions 729–733 match the 'KMSKS' region motif; that stretch reads KMGKS. Lys-732 provides a ligand contact to ATP.

This sequence belongs to the class-I aminoacyl-tRNA synthetase family.

It localises to the cytoplasm. It catalyses the reaction tRNA(Leu) + L-leucine + ATP = L-leucyl-tRNA(Leu) + AMP + diphosphate. This is Leucine--tRNA ligase from Salinispora tropica (strain ATCC BAA-916 / DSM 44818 / JCM 13857 / NBRC 105044 / CNB-440).